The primary structure comprises 314 residues: Malate dehydrogenase (314 aa).

NAD(+) is bound by residues 12-17 (GAGNIG) and aspartate 36. Positions 85 and 91 each coordinate substrate. Residues asparagine 98 and 121–123 (VTN) contribute to the NAD(+) site. The substrate site is built by asparagine 123 and arginine 154. The active-site Proton acceptor is histidine 178.

This sequence belongs to the LDH/MDH superfamily. MDH type 3 family.

The enzyme catalyses (S)-malate + NAD(+) = oxaloacetate + NADH + H(+). Catalyzes the reversible oxidation of malate to oxaloacetate. The protein is Malate dehydrogenase of Wolbachia pipientis subsp. Culex pipiens (strain wPip).